A 297-amino-acid chain; its full sequence is Virulence genes transcriptional activator SpvR (297 aa).

One can recognise an HTH lysR-type domain in the interval 1–61 (MDFLINKKLK…IRKNGTLIPT (61 aa)). The H-T-H motif DNA-binding region spans 21 to 40 (FSIATSVLYITRTPLSRVIS).

It belongs to the LysR transcriptional regulatory family.

Its subcellular location is the cytoplasm. In terms of biological role, positive regulator for the plasmid-encoded virulence factors SpvA, SpvB, and SpvC. This chain is Virulence genes transcriptional activator SpvR (spvR), found in Salmonella dublin.